The sequence spans 902 residues: Cytosolic 10-formyltetrahydrofolate dehydrogenase (902 aa).

A hydrolase domain region spans residues 1 to 310 (MKIAVIGQSL…LASNFFKGAA (310 aa)). Phosphoserine is present on serine 9. Position 38 is an N6-succinyllysine (lysine 38). 88–90 (QFI) serves as a coordination point for (6R)-10-formyltetrahydrofolate. Histidine 106 serves as the catalytic Proton donor. Aspartate 142 lines the (6R)-10-formyltetrahydrofolate pocket. Positions 318 to 395 (EAELVTAEAV…DFIQLLVRKL (78 aa)) constitute a Carrier domain. An O-(pantetheine 4'-phosphoryl)serine modification is found at serine 354. The tract at residues 417 to 902 (TIRIPHQLFI…LRVKTVTFEY (486 aa)) is aldehyde dehydrogenase domain. NADP(+) is bound by residues 571–573 (IPW) and 597–600 (KPAQ). Phosphoserine occurs at positions 629 and 631. NADP(+) contacts are provided by residues 630 to 635 (GSLVGQ) and 650 to 651 (GS). An N6-succinyllysine modification is found at lysine 660. Glutamate 673 functions as the Proton acceptor in the catalytic mechanism. Residue 673–674 (EL) coordinates NADP(+). Residue cysteine 707 is the Proton donor of the active site. Residue lysine 757 participates in NADP(+) binding. Lysine 767 carries the N6-succinyllysine modification. 804–806 (ESF) contributes to the NADP(+) binding site. Serine 825 carries the phosphoserine modification. Lysine 882 carries the N6-acetyllysine modification.

In the N-terminal section; belongs to the GART family. It in the C-terminal section; belongs to the aldehyde dehydrogenase family. ALDH1L subfamily. As to quaternary structure, homotetramer. Phosphopantetheinylation at Ser-354 by AASDHPPT is required for the formyltetrahydrofolate dehydrogenase activity.

Its subcellular location is the cytoplasm. The protein localises to the cytosol. It carries out the reaction (6R)-10-formyltetrahydrofolate + NADP(+) + H2O = (6S)-5,6,7,8-tetrahydrofolate + CO2 + NADPH + H(+). Its function is as follows. Cytosolic 10-formyltetrahydrofolate dehydrogenase that catalyzes the NADP(+)-dependent conversion of 10-formyltetrahydrofolate to tetrahydrofolate and carbon dioxide. May also have an NADP(+)-dependent aldehyde dehydrogenase activity towards formaldehyde, acetaldehyde, propionaldehyde, and benzaldehyde. The polypeptide is Cytosolic 10-formyltetrahydrofolate dehydrogenase (Pongo abelii (Sumatran orangutan)).